The chain runs to 122 residues: UPF0102 protein XAC0764 (122 aa).

The protein belongs to the UPF0102 family.

In Xanthomonas axonopodis pv. citri (strain 306), this protein is UPF0102 protein XAC0764.